We begin with the raw amino-acid sequence, 700 residues long: Dymeclin (700 aa).

G2 carries N-myristoyl glycine lipidation. At S347 the chain carries Phosphoserine.

It belongs to the dymeclin family.

In Drosophila pseudoobscura pseudoobscura (Fruit fly), this protein is Dymeclin.